The sequence spans 427 residues: 3-phosphoshikimate 1-carboxyvinyltransferase (427 aa).

3-phosphoshikimate is bound by residues Lys-22, Ser-23, and Arg-27. Lys-22 provides a ligand contact to phosphoenolpyruvate. Residues Gly-96 and Arg-124 each contribute to the phosphoenolpyruvate site. Ser-169, Ser-170, Gln-171, Ser-197, Asp-313, Asn-336, and Lys-340 together coordinate 3-phosphoshikimate. Gln-171 contributes to the phosphoenolpyruvate binding site. Asp-313 (proton acceptor) is an active-site residue. The phosphoenolpyruvate site is built by Arg-344, Arg-386, and Lys-411.

The protein belongs to the EPSP synthase family. In terms of assembly, monomer.

It is found in the cytoplasm. It carries out the reaction 3-phosphoshikimate + phosphoenolpyruvate = 5-O-(1-carboxyvinyl)-3-phosphoshikimate + phosphate. Its pathway is metabolic intermediate biosynthesis; chorismate biosynthesis; chorismate from D-erythrose 4-phosphate and phosphoenolpyruvate: step 6/7. Catalyzes the transfer of the enolpyruvyl moiety of phosphoenolpyruvate (PEP) to the 5-hydroxyl of shikimate-3-phosphate (S3P) to produce enolpyruvyl shikimate-3-phosphate and inorganic phosphate. This Enterobacter sp. (strain 638) protein is 3-phosphoshikimate 1-carboxyvinyltransferase.